The following is a 296-amino-acid chain: Biliverdin reductase A (296 aa).

Residues 1 to 2 (MN) constitute a propeptide that is removed on maturation. NADP(+) contacts are provided by residues 16-19 (VGRA), 44-46 (SRR), 77-80 (SSSH), and Y98. T174 is subject to Phosphothreonine. Phosphoserine is present on residues S178 and S230. Residues K248 and K253 each carry the N6-acetyllysine modification. Residues H280, C281, C292, and C293 each coordinate Zn(2+).

Belongs to the Gfo/Idh/MocA family. Biliverdin reductase subfamily. As to quaternary structure, monomer. Zn(2+) serves as cofactor. In terms of tissue distribution, liver.

The protein localises to the cytoplasm. The protein resides in the cytosol. The catalysed reaction is (4Z,15Z)-bilirubin IXalpha + NAD(+) = biliverdin IXalpha + NADH + H(+). It carries out the reaction (4Z,15Z)-bilirubin IXalpha + NADP(+) = biliverdin IXalpha + NADPH + H(+). The protein operates within porphyrin-containing compound metabolism; protoheme degradation. Reduces the gamma-methene bridge of the open tetrapyrrole, biliverdin IXalpha, to bilirubin with the concomitant oxidation of a NADH or NADPH cofactor. Does not reduce bilirubin IXbeta. Uses the reactants NADH or NADPH depending on the pH; NADH is used at the acidic pH range (6-6.9) and NADPH at the alkaline range (8.5-8.7). NADPH, however, is the probable reactant in biological systems. The protein is Biliverdin reductase A of Homo sapiens (Human).